Reading from the N-terminus, the 222-residue chain is Dihydrophenazinedicarboxylate synthase (222 aa).

S18 lines the substrate pocket. Residues 73 to 76 (RIVV) and 88 to 89 (ST) each bind FMN. H90 contacts substrate. FMN is bound by residues 94 to 95 (QK) and Q117. Positions 139 and 147 each coordinate substrate. Residues 152 to 153 (QS) and R205 each bind FMN.

It belongs to the pyridoxamine 5'-phosphate oxidase family. It depends on FMN as a cofactor.

It carries out the reaction (1R,6R)-1,4,5,5a,6,9-hexahydrophenazine-1,6-dicarboxylate + O2 = (1R,10aS)-1,4,10,10a-tetrahydrophenazine-1,6-dicarboxylate + H2O2. The enzyme catalyses (1R,10aS)-1,4,10,10a-tetrahydrophenazine-1,6-dicarboxylate + O2 = (5aS)-5,5a-dihydrophenazine-1,6-dicarboxylate + H2O2. It catalyses the reaction (1R,10aS)-1,4,10,10a-tetrahydrophenazine-1-carboxylate + O2 = (10aS)-10,10a-dihydrophenazine-1-carboxylate + H2O2. The catalysed reaction is (1R)-1,4,5,10-tetrahydrophenazine-1-carboxylate + O2 = (10aS)-10,10a-dihydrophenazine-1-carboxylate + H2O2. The protein operates within antibiotic biosynthesis; phenazine biosynthesis. Involved in the biosynthesis of the antibiotic phenazine, a nitrogen-containing heterocyclic molecule having important roles in virulence, competition and biological control. Catalyzes several oxidations in the terminal steps of core phenazine biosynthesis. It oxidizes both hexahydrophenazine-1,6-dicarboxylic acid (HHPDC) and tetrahydrophenazine-1-carboxylic acid (THPCA) and thereby contributes to the generation of both phenazine-1,6-dicarboxylic acid (PDC) and phenazine-1-carboxylic acid (PCA). This Pseudomonas chlororaphis (Pseudomonas aureofaciens) protein is Dihydrophenazinedicarboxylate synthase.